A 332-amino-acid polypeptide reads, in one-letter code: Delta-aminolevulinic acid dehydratase (332 aa).

K202 (schiff-base intermediate with substrate) is an active-site residue. 2 residues coordinate 5-aminolevulinate: R212 and K225. K256 acts as the Schiff-base intermediate with substrate in catalysis. Positions 282 and 321 each coordinate 5-aminolevulinate.

The protein belongs to the ALAD family. As to quaternary structure, homohexamer.

It carries out the reaction 2 5-aminolevulinate = porphobilinogen + 2 H2O + H(+). Its pathway is porphyrin-containing compound metabolism; protoporphyrin-IX biosynthesis; coproporphyrinogen-III from 5-aminolevulinate: step 1/4. Functionally, catalyzes an early step in the biosynthesis of tetrapyrroles. Binds two molecules of 5-aminolevulinate per subunit, each at a distinct site, and catalyzes their condensation to form porphobilinogen. In Rhodobacter capsulatus (Rhodopseudomonas capsulata), this protein is Delta-aminolevulinic acid dehydratase (hemB).